The sequence spans 606 residues: Pescadillo homolog (606 aa).

In terms of domain architecture, BRCT spans Leu346–Gln447. The tract at residues Tyr461–Gly497 is disordered. Positions Gln479–Gln496 are enriched in acidic residues.

The protein belongs to the pescadillo family. Component of the NOP7 complex, composed of ERB1, NOP7 and YTM1. The complex is held together by ERB1, which interacts with NOP7 via its N-terminal domain and with YTM1 via a high-affinity interaction between the seven-bladed beta-propeller domains of the 2 proteins. The NOP7 complex associates with the 66S pre-ribosome.

It is found in the nucleus. The protein localises to the nucleolus. The protein resides in the nucleoplasm. Functionally, component of the NOP7 complex, which is required for maturation of the 25S and 5.8S ribosomal RNAs and formation of the 60S ribosome. This Laccaria bicolor (strain S238N-H82 / ATCC MYA-4686) (Bicoloured deceiver) protein is Pescadillo homolog.